The chain runs to 78 residues: Acyl carrier protein (78 aa).

Residues 2-77 form the Carrier domain; sequence SDSAEKVKKI…DAIDYIEANK (76 aa). Serine 37 bears the O-(pantetheine 4'-phosphoryl)serine mark.

Belongs to the acyl carrier protein (ACP) family. Post-translationally, 4'-phosphopantetheine is transferred from CoA to a specific serine of apo-ACP by AcpS. This modification is essential for activity because fatty acids are bound in thioester linkage to the sulfhydryl of the prosthetic group.

It is found in the cytoplasm. Its pathway is lipid metabolism; fatty acid biosynthesis. Carrier of the growing fatty acid chain in fatty acid biosynthesis. The chain is Acyl carrier protein from Sphingopyxis alaskensis (strain DSM 13593 / LMG 18877 / RB2256) (Sphingomonas alaskensis).